The sequence spans 158 residues: NADPH-dependent 7-cyano-7-deazaguanine reductase (158 aa).

The Thioimide intermediate role is filled by C56. The active-site Proton donor is D63. Substrate contacts are provided by residues 78–80 and 97–98; these read VES and HE.

Belongs to the GTP cyclohydrolase I family. QueF type 1 subfamily.

It localises to the cytoplasm. The enzyme catalyses 7-aminomethyl-7-carbaguanine + 2 NADP(+) = 7-cyano-7-deazaguanine + 2 NADPH + 3 H(+). The protein operates within tRNA modification; tRNA-queuosine biosynthesis. Catalyzes the NADPH-dependent reduction of 7-cyano-7-deazaguanine (preQ0) to 7-aminomethyl-7-deazaguanine (preQ1). The polypeptide is NADPH-dependent 7-cyano-7-deazaguanine reductase (Rhodopseudomonas palustris (strain BisB5)).